We begin with the raw amino-acid sequence, 1344 residues long: Period circadian protein homolog 2 (1344 aa).

2 disordered regions span residues 1 to 21 (MDCI…PEQQ) and 42 to 112 (EYSG…NGKD). A compositionally biased stretch (polar residues) spans 10–21 (YSSTEEQNPEQQ). The span at 78 to 89 (SSGSSGNDFSGN) shows a compositional bias: low complexity. Residues 99 to 111 (HDSHGHESDENGK) show a composition bias toward basic and acidic residues. A Nuclear export signal 1 motif is present at residues 161–170 (LLKTLQELKA). Residues 231–298 (ITSEYIMKNA…FYTSTTPYRL (68 aa)) enclose the PAS 1 domain. The LXXLL motif lies at 358–362 (LCCVL). One can recognise a PAS 2 domain in the interval 371 to 437 (YEAPRIPPDK…MLAIHKKILQ (67 aa)). The region spanning 445–488 (YSPIRFCTRNGDYITMDTSWSSFINPWSRKVSFIIGRHKVRTGP) is the PAC domain. The Nuclear export signal 2 motif lies at 512–521 (ITEQIYRLLL). 5 disordered regions span residues 531-609 (GYGS…QVKD), 661-686 (AKRK…NAIQ), 823-894 (LQDK…WSPS), 1038-1065 (TETR…PLFQ), and 1107-1126 (TTDA…MDAQ). A compositionally biased stretch (low complexity) spans 549 to 559 (SSSDSTGNNND). 2 stretches are compositionally biased toward basic and acidic residues: residues 560 to 573 (DTQK…DARK) and 583 to 597 (TENK…EPSA). Residues 667–684 (PSSSVNSSVHEQKASVNA) are compositionally biased toward polar residues. Positions 825 to 836 (DKPKGRPGERGG) are enriched in basic and acidic residues. The short motif at 851 to 865 (KKSGKNRKSKRIKPQ) is the Nuclear localization signal element. Residues 852–862 (KSGKNRKSKRI) are compositionally biased toward basic residues. Polar residues-rich tracts occupy residues 865–875 (QESSDSTTSGT), 885–894 (GLNTTAWSPS), and 1045–1059 (SRSC…QDQA). Positions 1138 to 1142 (LDILL) match the LXXLL motif. A compositionally biased stretch (low complexity) spans 1149 to 1172 (GTGSASSGSGVSAAAESLGSGSNG). Residues 1149 to 1197 (GTGSASSGSGVSAAAESLGSGSNGCDMSGSRTGSSETSHTSKYFGSIDS) are disordered. Polar residues predominate over residues 1177–1197 (GSRTGSSETSHTSKYFGSIDS). Positions 1244–1344 (SRDLETVLKE…PLSQVNEEQT (101 aa)) are CRY binding domain.

Component of the circadian clock oscillator which includes the CRY proteins, CLOCK or NPAS2, BMAL1 or BMAL2, CSNK1E, and the PER proteins. Interacts directly with PER3, and through a C-terminal domain, with CRY1 and CRY2.

It localises to the nucleus. Its subcellular location is the cytoplasm. In terms of biological role, transcriptional repressor which forms a core component of the circadian clock. The circadian clock, an internal time-keeping system, regulates various physiological processes through the generation of approximately 24 hour circadian rhythms in gene expression, which are translated into rhythms in metabolism and behavior. It is derived from the Latin roots 'circa' (about) and 'diem' (day) and acts as an important regulator of a wide array of physiological functions including metabolism, sleep, body temperature, blood pressure, endocrine, immune, cardiovascular, and renal function. Consists of two major components: the central clock, residing in the suprachiasmatic nucleus (SCN) of the brain, and the peripheral clocks that are present in nearly every tissue and organ system. Both the central and peripheral clocks can be reset by environmental cues, also known as Zeitgebers (German for 'timegivers'). The predominant Zeitgeber for the central clock is light, which is sensed by retina and signals directly to the SCN. The central clock entrains the peripheral clocks through neuronal and hormonal signals, body temperature and feeding-related cues, aligning all clocks with the external light/dark cycle. Circadian rhythms allow an organism to achieve temporal homeostasis with its environment at the molecular level by regulating gene expression to create a peak of protein expression once every 24 hours to control when a particular physiological process is most active with respect to the solar day. Transcription and translation of core clock components (CLOCK, NPAS2, BMAL1, BMAL2, PER1, PER2, PER3, CRY1 and CRY2) plays a critical role in rhythm generation, whereas delays imposed by post-translational modifications (PTMs) are important for determining the period (tau) of the rhythms (tau refers to the period of a rhythm and is the length, in time, of one complete cycle). A diurnal rhythm is synchronized with the day/night cycle, while the ultradian and infradian rhythms have a period shorter and longer than 24 hours, respectively. Disruptions in the circadian rhythms contribute to the pathology of cardiovascular diseases, cancer, metabolic syndrome and aging. A transcription/translation feedback loop (TTFL) forms the core of the molecular circadian clock mechanism. Transcription factors, CLOCK or NPAS2 and BMAL1 or BMAL2, form the positive limb of the feedback loop, act in the form of a heterodimer and activate the transcription of core clock genes and clock-controlled genes (involved in key metabolic processes), harboring E-box elements (5'-CACGTG-3') within their promoters. The core clock genes: PER1/2/3 and CRY1/2 which are transcriptional repressors form the negative limb of the feedback loop and interact with the CLOCK|NPAS2-BMAL1|BMAL2 heterodimer inhibiting its activity and thereby negatively regulating their own expression. This heterodimer also activates nuclear receptors NR1D1/2 and RORA/B/G, which form a second feedback loop and which activate and repress BMAL1 transcription, respectively. PER1 and PER2 proteins transport CRY1 and CRY2 into the nucleus with appropriate circadian timing, but also contribute directly to repression of clock-controlled target genes through interaction with several classes of RNA-binding proteins, helicases and others transcriptional repressors. PER appears to regulate circadian control of transcription by at least three different modes. First, interacts directly with the CLOCK-BMAL1 at the tail end of the nascent transcript peak to recruit complexes containing the SIN3-HDAC that remodel chromatin to repress transcription. Second, brings H3K9 methyltransferases such as SUV39H1 and SUV39H2 to the E-box elements of the circadian target genes, like PER2 itself or PER1. The recruitment of each repressive modifier to the DNA seems to be very precisely temporally orchestrated by the large PER complex, the deacetylases acting before than the methyltransferases. Additionally, large PER complexes are also recruited to the target genes 3' termination site through interactions with RNA-binding proteins and helicases that may play a role in transcription termination to regulate transcription independently of CLOCK-BMAL1 interactions. This is Period circadian protein homolog 2 (PER2) from Gallus gallus (Chicken).